Reading from the N-terminus, the 144-residue chain is Putative lipoprotein MAH_0816 (144 aa).

The first 24 residues, 1-24 (MRWPMQNRTTAVIAVALATTALVA), serve as a signal peptide directing secretion. The N-palmitoyl cysteine moiety is linked to residue Cys25. Cys25 carries S-diacylglycerol cysteine lipidation.

It belongs to the mycobacterial 19 kDa antigen family.

Its subcellular location is the cell membrane. This chain is Putative lipoprotein MAH_0816, found in Mycobacterium avium subsp. hominissuis (strain TH135).